The primary structure comprises 290 residues: Probable endonuclease 4 (290 aa).

The Zn(2+) site is built by H69, H109, E145, D179, H182, H216, D229, H231, and E261.

Belongs to the AP endonuclease 2 family. Zn(2+) serves as cofactor.

It carries out the reaction Endonucleolytic cleavage to 5'-phosphooligonucleotide end-products.. Functionally, endonuclease IV plays a role in DNA repair. It cleaves phosphodiester bonds at apurinic or apyrimidinic (AP) sites, generating a 3'-hydroxyl group and a 5'-terminal sugar phosphate. The polypeptide is Probable endonuclease 4 (Chlorobium limicola (strain DSM 245 / NBRC 103803 / 6330)).